The primary structure comprises 139 residues: Ribonuclease P protein component (139 aa).

The tract at residues 120–139 is disordered; that stretch reads KATTGGECTPKSEKCVTAPR.

Belongs to the RnpA family. Consists of a catalytic RNA component (M1 or rnpB) and a protein subunit.

The catalysed reaction is Endonucleolytic cleavage of RNA, removing 5'-extranucleotides from tRNA precursor.. Functionally, RNaseP catalyzes the removal of the 5'-leader sequence from pre-tRNA to produce the mature 5'-terminus. It can also cleave other RNA substrates such as 4.5S RNA. The protein component plays an auxiliary but essential role in vivo by binding to the 5'-leader sequence and broadening the substrate specificity of the ribozyme. This chain is Ribonuclease P protein component, found in Chlamydia pneumoniae (Chlamydophila pneumoniae).